Consider the following 319-residue polypeptide: Ester hydrolase C11orf54 homolog (319 aa).

The Zn(2+) site is built by histidine 270, histidine 272, and histidine 282.

Monomer. It depends on Zn(2+) as a cofactor.

It is found in the nucleus. It localises to the cytoplasm. Its function is as follows. Exhibits ester hydrolase activity on the substrate p-nitrophenyl acetate, in vitro. May regulate DNA damage and repair by regulating HIF1A degradation via chaperone-mediated autophagy (CMA). The chain is Ester hydrolase C11orf54 homolog from Danio rerio (Zebrafish).